A 1442-amino-acid chain; its full sequence is DNA polymerase III PolC-type (1442 aa).

Residues 426–582 form the Exonuclease domain; the sequence is YVVFDVETTG…YDTEATAYIF (157 aa).

It belongs to the DNA polymerase type-C family. PolC subfamily.

It is found in the cytoplasm. It catalyses the reaction DNA(n) + a 2'-deoxyribonucleoside 5'-triphosphate = DNA(n+1) + diphosphate. Functionally, required for replicative DNA synthesis. This DNA polymerase also exhibits 3' to 5' exonuclease activity. This chain is DNA polymerase III PolC-type, found in Staphylococcus epidermidis (strain ATCC 12228 / FDA PCI 1200).